The chain runs to 554 residues: Hydroxylamine reductase (554 aa).

4 residues coordinate [2Fe-2S] cluster: Cys-3, Cys-6, Cys-18, and Cys-25. Hybrid [4Fe-2O-2S] cluster-binding residues include His-252, Glu-276, Cys-320, Cys-408, Cys-436, Cys-461, Glu-495, and Lys-497. Cysteine persulfide is present on Cys-408.

The protein belongs to the HCP family. [2Fe-2S] cluster serves as cofactor. Hybrid [4Fe-2O-2S] cluster is required as a cofactor.

Its subcellular location is the cytoplasm. The enzyme catalyses A + NH4(+) + H2O = hydroxylamine + AH2 + H(+). Catalyzes the reduction of hydroxylamine to form NH(3) and H(2)O. In Shewanella oneidensis (strain ATCC 700550 / JCM 31522 / CIP 106686 / LMG 19005 / NCIMB 14063 / MR-1), this protein is Hydroxylamine reductase.